Here is a 126-residue protein sequence, read N- to C-terminus: Aspartate 1-decarboxylase 1 (126 aa).

The active-site Schiff-base intermediate with substrate; via pyruvic acid is serine 25. Serine 25 is modified (pyruvic acid (Ser)). Substrate is bound at residue threonine 57. Tyrosine 58 serves as the catalytic Proton donor. A substrate-binding site is contributed by 73–75; the sequence is GSA.

It belongs to the PanD family. Heterooctamer of four alpha and four beta subunits. Pyruvate is required as a cofactor. Post-translationally, is synthesized initially as an inactive proenzyme, which is activated by self-cleavage at a specific serine bond to produce a beta-subunit with a hydroxyl group at its C-terminus and an alpha-subunit with a pyruvoyl group at its N-terminus.

The protein resides in the cytoplasm. It carries out the reaction L-aspartate + H(+) = beta-alanine + CO2. The protein operates within cofactor biosynthesis; (R)-pantothenate biosynthesis; beta-alanine from L-aspartate: step 1/1. In terms of biological role, catalyzes the pyruvoyl-dependent decarboxylation of aspartate to produce beta-alanine. This chain is Aspartate 1-decarboxylase 1, found in Polaromonas sp. (strain JS666 / ATCC BAA-500).